Consider the following 380-residue polypeptide: Oocyte-specific homeobox protein 4 (380 aa).

Disordered stretches follow at residues 1-25 (MSKD…SFLV), 43-95 (VTPT…RKCR), 152-182 (KSSQ…FAAS), 234-303 (PRQK…CQTP), and 339-380 (TRSK…SSAY). Residues 43 to 53 (VTPTRPLQSSH) are compositionally biased toward polar residues. Positions 54-67 (SVHERDLHQKDSQE) are enriched in basic and acidic residues. A DNA-binding region (homeobox) is located at residues 94–153 (CRKERTVYSKEQKCLLQEHFHQCQNPDLEQRKALALLIGVTEYKIQTWFKNRRAKECRKS). Over residues 234-250 (PRQKCRELSREPGHLSS) the composition is skewed to basic and acidic residues. The segment covering 260–271 (SSPSPAAGAESS) has biased composition (low complexity). Composition is skewed to polar residues over residues 278-302 (LSLS…MCQT) and 351-380 (NTVQ…SSAY).

Belongs to the paired homeobox family. Obox subfamily. As to expression, specifically expressed in early embryos.

The protein localises to the nucleus. Transcription factor required for zygotic genome activation (ZGA), a critical event in early embryonic development during which the developmental control passes from maternally provided mRNAs to the expression of the zygotic genome after fertilization. Cannot compensate for loss of other members of the Obox family, suggesting that its function differs from other Obox family members. May regulate expression of histone genes in embryonic stem cells. Also involved in completion of meiosis of oocytes during the meiosis-I/meiosis-II transition. Required to maintain the nuclear membrane of the germinal vesicle in oocytes. The chain is Oocyte-specific homeobox protein 4 from Mus musculus (Mouse).